Reading from the N-terminus, the 1077-residue chain is Serine/threonine-protein kinase sel-5 (1077 aa).

Positions 47–317 constitute a Protein kinase domain; that stretch reads VTIEKQIAEG…IYQTSVLAFE (271 aa). ATP-binding positions include 53 to 61 and Lys-75; that span reads IAEGGFAIV. Asp-178 serves as the catalytic Proton acceptor. Disordered stretches follow at residues 347–444, 488–554, 616–813, and 920–1077; these read MRDG…TDGS, GFTD…SQVV, ELDS…TNPF, and LISV…PTDL. A compositionally biased stretch (polar residues) spans 369–399; the sequence is IQSSSKMASLSQQVPSISNISMPSGSGTVET. Positions 491–515 are enriched in basic and acidic residues; the sequence is DLDKPALPRDRAQTDGKRRLPHESD. Positions 541–554 are enriched in low complexity; it reads SSQQTTSKTSSQVV. Polar residues predominate over residues 638–648; it reads LTVSTSSSAQP. Positions 655–679 are enriched in acidic residues; that stretch reads TDEDDERQLLSETDEEEKYEIDEKE. Basic and acidic residues-rich tracts occupy residues 697–708 and 739–751; these read DEQRMNDRRRYS and DSRR…HDED. A compositionally biased stretch (acidic residues) spans 770 to 780; the sequence is EDDGLEDDDDH. The segment covering 799–810 has biased composition (polar residues); sequence GTSTPHTQNPIT. A compositionally biased stretch (pro residues) spans 927–936; the sequence is TDPPPPPLPK. Over residues 941-950 the composition is skewed to polar residues; sequence ASPTQETTAT. The span at 960–969 shows a compositional bias: basic residues; sequence KLLKKEKKKE. Over residues 970–989 the composition is skewed to basic and acidic residues; that stretch reads KKDGKKDKLKLEEYREKGSS. Polar residues predominate over residues 1054–1067; the sequence is LTGKNASFVNTSFQ.

This sequence belongs to the protein kinase superfamily. Ser/Thr protein kinase family. Mg(2+) is required as a cofactor.

The protein resides in the cytoplasm. It carries out the reaction L-seryl-[protein] + ATP = O-phospho-L-seryl-[protein] + ADP + H(+). The enzyme catalyses L-threonyl-[protein] + ATP = O-phospho-L-threonyl-[protein] + ADP + H(+). Its function is as follows. Serine/threonine-protein kinase which may play a role in lin-12-mediated cell-fate decisions. This is Serine/threonine-protein kinase sel-5 from Caenorhabditis elegans.